A 356-amino-acid chain; its full sequence is Arginine kinase (356 aa).

In terms of domain architecture, Phosphagen kinase N-terminal spans 8 to 91; sequence EKLEAGFKKL…FDPIIEDYHG (84 aa). Substrate is bound at residue 64–68; the sequence is GVGIY. Residues 119 to 356 enclose the Phosphagen kinase C-terminal domain; that stretch reads YVISTRVRCG…LELIKIEGSL (238 aa). ATP contacts are provided by residues 122–126 and His-185; that span reads STRVR. Glu-225 is a substrate binding site. Residue Arg-229 participates in ATP binding. Residue Cys-271 participates in substrate binding. Residues 280 to 284 and 309 to 314 each bind ATP; these read RASVH and RGSTGE. Position 314 (Glu-314) interacts with substrate.

It belongs to the ATP:guanido phosphotransferase family.

It catalyses the reaction L-arginine + ATP = N(omega)-phospho-L-arginine + ADP + H(+). The protein is Arginine kinase (ARGK) of Schistocerca americana (American grasshopper).